A 68-amino-acid polypeptide reads, in one-letter code: Phycobilisome 7.8 kDa linker polypeptide, allophycocyanin-associated, core (68 aa).

The CpcD-like domain occupies 2–57; sequence SRLFKITALVPSLSRTRTQRELQNTYFTKLVPYENWFREQQRIQKAGGKIIKVELA.

It belongs to the phycobilisome linker protein family.

Its subcellular location is the cellular thylakoid membrane. Its function is as follows. Rod linker protein, associated with allophycocyanin. Linker polypeptides determine the state of aggregation and the location of the disk-shaped phycobiliprotein units within the phycobilisome and modulate their spectroscopic properties in order to mediate a directed and optimal energy transfer. This is Phycobilisome 7.8 kDa linker polypeptide, allophycocyanin-associated, core (apcC) from Nostoc sp. (strain PCC 7120 / SAG 25.82 / UTEX 2576).